We begin with the raw amino-acid sequence, 492 residues long: Ketol-acid reductoisomerase (NADP(+)) (492 aa).

Positions 14 to 208 (LDQLGRCRFM…GGHKAGVLES (195 aa)) constitute a KARI N-terminal Rossmann domain. Residues 45–48 (CGAQ), arginine 68, arginine 76, serine 78, and 108–110 (DKQ) contribute to the NADP(+) site. Histidine 132 is an active-site residue. An NADP(+)-binding site is contributed by glycine 158. KARI C-terminal knotted domains lie at 209-344 (SFVA…NAPK) and 345-485 (YDGK…MTDM). Residues aspartate 217, glutamate 221, glutamate 389, and glutamate 393 each contribute to the Mg(2+) site. Serine 414 contributes to the substrate binding site.

Belongs to the ketol-acid reductoisomerase family. The cofactor is Mg(2+).

The catalysed reaction is (2R)-2,3-dihydroxy-3-methylbutanoate + NADP(+) = (2S)-2-acetolactate + NADPH + H(+). The enzyme catalyses (2R,3R)-2,3-dihydroxy-3-methylpentanoate + NADP(+) = (S)-2-ethyl-2-hydroxy-3-oxobutanoate + NADPH + H(+). Its pathway is amino-acid biosynthesis; L-isoleucine biosynthesis; L-isoleucine from 2-oxobutanoate: step 2/4. The protein operates within amino-acid biosynthesis; L-valine biosynthesis; L-valine from pyruvate: step 2/4. In terms of biological role, involved in the biosynthesis of branched-chain amino acids (BCAA). Catalyzes an alkyl-migration followed by a ketol-acid reduction of (S)-2-acetolactate (S2AL) to yield (R)-2,3-dihydroxy-isovalerate. In the isomerase reaction, S2AL is rearranged via a Mg-dependent methyl migration to produce 3-hydroxy-3-methyl-2-ketobutyrate (HMKB). In the reductase reaction, this 2-ketoacid undergoes a metal-dependent reduction by NADPH to yield (R)-2,3-dihydroxy-isovalerate. This chain is Ketol-acid reductoisomerase (NADP(+)), found in Haemophilus influenzae (strain PittGG).